The chain runs to 685 residues: Mannan-binding lectin serine protease 2 (685 aa).

An N-terminal signal peptide occupies residues 1–19; the sequence is MRLLIVLGLLWSLVATLLG. The CUB 1 domain maps to 20 to 137; that stretch reads SKWPEPVFGR…TGFEAFYAAE (118 aa). Ca(2+)-binding residues include Glu-67 and Asp-75. An intrachain disulfide couples Cys-72 to Cys-90. N-linked (GlcNAc...) asparagine glycosylation occurs at Asn-103. The Ca(2+) site is built by Asp-120, Ser-122, Asn-123, Asp-138, and Val-139. The EGF-like; calcium-binding domain occupies 138-181; that stretch reads DVDECRTSLGDSVPCDHYCHNYLGGYYCSCRVGYILHQNKHTCS. 4 disulfides stabilise this stretch: Cys-152/Cys-165, Cys-167/Cys-180, Cys-184/Cys-211, and Cys-241/Cys-259. Asn-158 carries the post-translational modification (3R)-3-hydroxyasparagine. Positions 159 and 162 each coordinate Ca(2+). The 113-residue stretch at 184–296 folds into the CUB 2 domain; that stretch reads CSGQVFTGRS…TGWKIHYTST (113 aa). Asn-285 carries N-linked (GlcNAc...) asparagine glycosylation. 2 Sushi domains span residues 298–363 and 364–431; these read QPCP…ECSI and IDCG…VCKP. Intrachain disulfides connect Cys-300–Cys-348, Cys-328–Cys-361, Cys-366–Cys-411, Cys-396–Cys-429, Cys-433–Cys-551, Cys-597–Cys-617, and Cys-628–Cys-659. A Peptidase S1 domain is found at 444-683; the sequence is IIGGQPAKPG…YIPWIENIIN (240 aa). Active-site charge relay system residues include His-482 and Asp-531. Ser-632 functions as the Charge relay system in the catalytic mechanism. Residue Asn-641 is glycosylated (N-linked (GlcNAc...) asparagine).

It belongs to the peptidase S1 family. Homodimer; disulfide-linked. Binds MBL2. Isoform 2 binds to MASP1. Binds SERPING1. N-glycosylated. Post-translationally, the iron and 2-oxoglutarate dependent 3-hydroxylation of aspartate and asparagine is (R) stereospecific within EGF domains. In terms of tissue distribution, highly expressed in liver. Secreted in plasma.

The protein localises to the secreted. It carries out the reaction Selective cleavage after Arg-223 in complement component C2 (-Ser-Leu-Gly-Arg-|-Lys-Ile-Gln-Ile) and after Arg-76 in complement component C4 (-Gly-Leu-Gln-Arg-|-Ala-Leu-Glu-Ile).. Serum protease that plays an important role in the activation of the complement system via mannose-binding lectin. After activation by auto-catalytic cleavage it cleaves C2 and C4, leading to their activation and to the formation of C3 convertase. This Rattus norvegicus (Rat) protein is Mannan-binding lectin serine protease 2 (Masp2).